Here is a 381-residue protein sequence, read N- to C-terminus: Chaperone protein DnaJ (381 aa).

A J domain is found at 5 to 70; that stretch reads DFYEVLGVGR…QKKAAYDQYG (66 aa). The segment at 136–214 adopts a CR-type zinc-finger fold; the sequence is GVSKEIEVPT…CHGQGRKQKT (79 aa). Cysteine 149, cysteine 152, cysteine 166, cysteine 169, cysteine 188, cysteine 191, cysteine 202, and cysteine 205 together coordinate Zn(2+). 4 CXXCXGXG motif repeats span residues 149-156, 166-173, 188-195, and 202-209; these read CDTCDGSG, CGTCHGHG, CPTCHGKG, and CNECHGQG.

The protein belongs to the DnaJ family. As to quaternary structure, homodimer. Zn(2+) serves as cofactor.

It is found in the cytoplasm. Participates actively in the response to hyperosmotic and heat shock by preventing the aggregation of stress-denatured proteins and by disaggregating proteins, also in an autonomous, DnaK-independent fashion. Unfolded proteins bind initially to DnaJ; upon interaction with the DnaJ-bound protein, DnaK hydrolyzes its bound ATP, resulting in the formation of a stable complex. GrpE releases ADP from DnaK; ATP binding to DnaK triggers the release of the substrate protein, thus completing the reaction cycle. Several rounds of ATP-dependent interactions between DnaJ, DnaK and GrpE are required for fully efficient folding. Also involved, together with DnaK and GrpE, in the DNA replication of plasmids through activation of initiation proteins. This is Chaperone protein DnaJ from Vibrio campbellii (strain ATCC BAA-1116).